The sequence spans 453 residues: MREVISIHVGQAGIQVGNACWELFCLEHGIQPDGQMPSDKASRANDDAFNTFFSETGAGKHVPRCVFVDLEPTVVDEVRTGTYRQLFHPEQLISGKEDAANNFARGHYTIGKEVIDVCLDRIRKLADNCTGLQGFLMFSAVGGGTGSGFGCLMLERLSVDYGKKSKLNFCCWPSPQVSTAVVEPYNSVLSTHSLLEHTDVAIMLDNEAIYDICRRNLDIERPTYTNLNRLIAQVISSLTASLRFDGALNVDVTEFQTNLVPYPRIHFMLSSYAPVVSAEKAYHEQLSVSEITNSAFEPANMMAKCDPRHGKYMACCLMYRGDVVPKDVNAAVATIKTKRTIQFVDWCPTGFKCGINYQPPTVVPGGDLAKVMRAVCMISNSTAIAEVFSRMDQKFDLMYAKRAFVHWYVGEGMEEGEFSEAREDLAALEKDYEEVGIESNEAEGEDEGYEADY.

Gln11 contributes to the GTP binding site. Lys40 is modified (N6-acetyllysine). GTP-binding residues include Glu71, Gly144, Thr145, Thr179, Asn206, and Asn228. Glu71 is a Mg(2+) binding site. Glu254 is a catalytic residue.

It belongs to the tubulin family. Dimer of alpha and beta chains. A typical microtubule is a hollow water-filled tube with an outer diameter of 25 nm and an inner diameter of 15 nM. Alpha-beta heterodimers associate head-to-tail to form protofilaments running lengthwise along the microtubule wall with the beta-tubulin subunit facing the microtubule plus end conferring a structural polarity. Microtubules usually have 13 protofilaments but different protofilament numbers can be found in some organisms and specialized cells. Mg(2+) is required as a cofactor. In terms of processing, undergoes a tyrosination/detyrosination cycle, the cyclic removal and re-addition of a C-terminal tyrosine residue by the enzymes tubulin tyrosine carboxypeptidase (TTCP) and tubulin tyrosine ligase (TTL), respectively. Post-translationally, acetylation of alpha chains at Lys-40 stabilizes microtubules and affects affinity and processivity of microtubule motors. This modification has a role in multiple cellular functions, ranging from cell motility, cell cycle progression or cell differentiation to intracellular trafficking and signaling.

The protein localises to the cytoplasm. It localises to the cytoskeleton. The catalysed reaction is GTP + H2O = GDP + phosphate + H(+). Functionally, tubulin is the major constituent of microtubules, a cylinder consisting of laterally associated linear protofilaments composed of alpha- and beta-tubulin heterodimers. Microtubules grow by the addition of GTP-tubulin dimers to the microtubule end, where a stabilizing cap forms. Below the cap, tubulin dimers are in GDP-bound state, owing to GTPase activity of alpha-tubulin. This Plasmodium falciparum (isolate K1 / Thailand) protein is Tubulin alpha chain.